The chain runs to 322 residues: MIQHLALDALQRHLAGSPLYGWATSLPAQIAARIEEGHGDLARWWSAVQRLPQVPAPKVELAQRFALHSDHDAALQAQVKEALQGLIPWRKGPFDFFGVQVDTEWRSDWKWERVSPHVELRGKRVLDVGCGNGYYQWRMLGAGAESVVGVDPNWLFLCQFLAAKRYLPELPAWHLPLALEDLPEKLEGFDTVFSMGVLYHRRSPIDHLLALKDCLKRGGELVLETLVVEGDASTVLVPEDRYAQMRNVWFLPSVAALELWLRRAGFADARCVDVSLTSVEEQRSTEWMRFQSLPEFLDPQDRSRTVEGLPAPMRATLVARKP.

Carboxy-S-adenosyl-L-methionine-binding positions include K91, W105, K110, G129, 179–180 (LE), M195, Y199, and R314.

It belongs to the class I-like SAM-binding methyltransferase superfamily. CmoB family. In terms of assembly, homotetramer.

It carries out the reaction carboxy-S-adenosyl-L-methionine + 5-hydroxyuridine(34) in tRNA = 5-carboxymethoxyuridine(34) in tRNA + S-adenosyl-L-homocysteine + H(+). Functionally, catalyzes carboxymethyl transfer from carboxy-S-adenosyl-L-methionine (Cx-SAM) to 5-hydroxyuridine (ho5U) to form 5-carboxymethoxyuridine (cmo5U) at position 34 in tRNAs. The protein is tRNA U34 carboxymethyltransferase of Pseudomonas aeruginosa (strain LESB58).